The following is a 248-amino-acid chain: Pulmonary surfactant-associated protein A (248 aa).

A signal peptide spans 1–17; sequence MWLRCLALALTLLMVSG. An N-linked (GlcNAc...) asparagine glycan is attached at N20. A Collagen-like domain is found at 28–100; the sequence is GNPGIPGTPG…PGERGPPGLP (73 aa). Residues 29-103 are disordered; sequence NPGIPGTPGS…RGPPGLPASL (75 aa). A 4-hydroxyproline mark is found at P30, P33, P36, P42, P54, P57, P63, P67, and P70. The span at 42–51 shows a compositional bias: basic and acidic residues; that stretch reads PGRDGRDGVK. Residues 54–65 show a composition bias toward pro residues; that stretch reads PGPPGPLGPPGG. Basic and acidic residues predominate over residues 84–93; that stretch reads ERGEKGEPGE. The region spanning 132-248 is the C-type lectin domain; sequence LVVGRKVFSS…LQYRLAICEF (117 aa). 2 cysteine pairs are disulfide-bonded: C155–C246 and C224–C238. An N-linked (GlcNAc...) asparagine glycan is attached at N207. Positions 215, 217, and 234 each coordinate Ca(2+).

This sequence belongs to the SFTPA family. As to quaternary structure, oligomeric complex of 6 set of homotrimers.

It is found in the secreted. The protein localises to the extracellular space. It localises to the extracellular matrix. Its subcellular location is the surface film. Functionally, in presence of calcium ions, it binds to surfactant phospholipids and contributes to lower the surface tension at the air-liquid interface in the alveoli of the mammalian lung and is essential for normal respiration. Enhances the expression of MYO18A/SP-R210 on alveolar macrophages. This chain is Pulmonary surfactant-associated protein A (SFTPA1), found in Canis lupus familiaris (Dog).